Reading from the N-terminus, the 868-residue chain is Translation initiation factor IF-2 (868 aa).

The disordered stretch occupies residues lysine 201–glutamate 269. Basic residues predominate over residues arginine 249–glycine 260. The 170-residue stretch at glycine 368–lysine 537 folds into the tr-type G domain. The interval glycine 377 to threonine 384 is G1. Residue glycine 377–threonine 384 participates in GTP binding. The G2 stretch occupies residues glycine 402–histidine 406. The segment at aspartate 423–glycine 426 is G3. GTP is bound by residues aspartate 423 to histidine 427 and asparagine 477 to aspartate 480. The G4 stretch occupies residues asparagine 477–aspartate 480. Residues serine 513–lysine 515 form a G5 region.

The protein belongs to the TRAFAC class translation factor GTPase superfamily. Classic translation factor GTPase family. IF-2 subfamily.

Its subcellular location is the cytoplasm. One of the essential components for the initiation of protein synthesis. Protects formylmethionyl-tRNA from spontaneous hydrolysis and promotes its binding to the 30S ribosomal subunits. Also involved in the hydrolysis of GTP during the formation of the 70S ribosomal complex. The sequence is that of Translation initiation factor IF-2 from Legionella pneumophila (strain Corby).